Reading from the N-terminus, the 366-residue chain is 5-hydroxytryptamine receptor 1F (366 aa).

The Extracellular segment spans residues 1–24 (MDFLNSSDQNLTSEELLHRMPSKI). N5 and N10 each carry an N-linked (GlcNAc...) asparagine glycan. Residues 25–49 (LVSLTLSGLALMTTTINSLVIAAII) traverse the membrane as a helical segment. The Cytoplasmic portion of the chain corresponds to 50–59 (VTRKLHHPAN). The chain crosses the membrane as a helical span at residues 60–81 (YLICSLAVTDFLVAVLVMPFSI). Residues 82–96 (VYIVRESWIMGQVLC) are Extracellular-facing. C96 and C172 are joined by a disulfide. Residues 97 to 119 (DIWLSVDIICCTCSILHLSAIAL) form a helical membrane-spanning segment. Serotonin is bound by residues D103 and C107. The DRY motif; important for ligand-induced conformation changes motif lies at 120–122 (DRY). Over 120–139 (DRYRAITDAVEYARKRTPKQ) the chain is Cytoplasmic. Residues 140–159 (AGIMITIVWIISVFISMPPL) traverse the membrane as a helical segment. The Extracellular portion of the chain corresponds to 160–178 (FWRHQGTSRDDECIIKHDH). The chain crosses the membrane as a helical span at residues 179 to 202 (IVSTIYSTFGAFYIPLVLILILYY). The Cytoplasmic segment spans residues 203–291 (KIYKAAKTLY…KISGTRERKA (89 aa)). A helical membrane pass occupies residues 292 to 315 (ATTLGLILGAFVICWLPFFVKELV). Residues 316–327 (VNVCEKCKISEE) are Extracellular-facing. The helical transmembrane segment at 328–350 (MANFLAWLGYLNSLINPLIYTIF) threads the bilayer. The NPxxY motif; important for ligand-induced conformation changes and signaling motif lies at 343 to 347 (NPLIY). Residues 351 to 366 (NEDFKKAFQKLVRCQY) are Cytoplasmic-facing.

This sequence belongs to the G-protein coupled receptor 1 family.

It is found in the cell membrane. Its function is as follows. G-protein coupled receptor for 5-hydroxytryptamine (serotonin). Also functions as a receptor for various alkaloids and psychoactive substances. Ligand binding causes a conformation change that triggers signaling via guanine nucleotide-binding proteins (G proteins) and modulates the activity of downstream effectors, such as adenylate cyclase. HTR1F is coupled to G(i)/G(o) G alpha proteins and mediates inhibitory neurotransmission by inhibiting adenylate cyclase activity. In Cavia porcellus (Guinea pig), this protein is 5-hydroxytryptamine receptor 1F (HTR1F).